The chain runs to 160 residues: Large ribosomal subunit protein uL16 (160 aa).

Residues 138 to 160 are disordered; the sequence is KNLEAPSQEKTKNSKKSQEEVKQ.

Belongs to the universal ribosomal protein uL16 family. As to quaternary structure, part of the 50S ribosomal subunit.

In terms of biological role, binds 23S rRNA and is also seen to make contacts with the A and possibly P site tRNAs. The chain is Large ribosomal subunit protein uL16 from Prochlorococcus marinus (strain MIT 9215).